A 25-amino-acid chain; its full sequence is Snake venom metalloproteinase catroxase (25 aa).

Glutamate 9 is a binding site for Ca(2+).

This sequence belongs to the venom metalloproteinase (M12B) family. Monomer. Zn(2+) is required as a cofactor. Expressed by the venom gland.

Its subcellular location is the secreted. With respect to regulation, inhibited by EDTA, beta-mercaptoethanol, but not by PMSF, p-tosyl-L-phenylalanine chloromethyl ketone, p-tosyl-L-lysine chloromethyl ketone, soybean trypsin inhibitor and aprotinin. Functionally, metalloprotease that is highly active against alpha-(FGA) and beta-chains (FGB) of fibrinogen molecules. This is Snake venom metalloproteinase catroxase from Crotalus atrox (Western diamondback rattlesnake).